Reading from the N-terminus, the 346-residue chain is Large ribosomal subunit protein uL3 (346 aa).

A disordered region spans residues 324-346 (RPPKKKPPVERPQITYVSRESKQ).

Belongs to the universal ribosomal protein uL3 family. Part of the 50S ribosomal subunit. Forms a cluster with proteins L14 and L24e.

One of the primary rRNA binding proteins, it binds directly near the 3'-end of the 23S rRNA, where it nucleates assembly of the 50S subunit. This Thermococcus kodakarensis (strain ATCC BAA-918 / JCM 12380 / KOD1) (Pyrococcus kodakaraensis (strain KOD1)) protein is Large ribosomal subunit protein uL3.